The following is a 55-amino-acid chain: Lantibiotic nisin-U (55 aa).

A propeptide spanning residues 1 to 24 (MNNEDFNLDLIKISKENNSGASPR) is cleaved from the precursor. Thr-26 is subject to 2,3-didehydrobutyrine. Positions 27-31 (SKSLC) form a cross-link, lanthionine (Ser-Cys). Ser-29 carries the post-translational modification 2,3-didehydroalanine (Ser). 4 cross-links (beta-methyllanthionine (Thr-Cys)) span residues 32–35 (TPGC), 37–43 (TGILMTC), 47–50 (TATC), and 49–52 (TCGC). Residue Thr-42 is modified to 2,3-didehydrobutyrine.

Maturation of lantibiotics involves the enzymatic conversion of Thr, and Ser into dehydrated AA and the formation of thioether bonds with cysteine. This is followed by membrane translocation and cleavage of the modified precursor.

Its subcellular location is the secreted. In terms of biological role, lanthionine-containing peptide antibiotic (lantibiotic) active on Gram-positive bacteria. The bactericidal activity of lantibiotics is based on depolarization of energized bacterial cytoplasmic membranes, initiated by the formation of aqueous transmembrane pores. The chain is Lantibiotic nisin-U (nsuA) from Streptococcus uberis.